The chain runs to 430 residues: Small ribosomal subunit protein uS3m (430 aa).

Belongs to the universal ribosomal protein uS3 family.

It is found in the mitochondrion. The sequence is that of Small ribosomal subunit protein uS3m (RPS3) from Marchantia polymorpha (Common liverwort).